The sequence spans 355 residues: Heme A synthase (355 aa).

8 consecutive transmembrane segments (helical) span residues leucine 21–isoleucine 41, isoleucine 85–tryptophan 102, leucine 136–serine 156, leucine 173–leucine 193, alanine 208–leucine 228, phenylalanine 264–leucine 284, alanine 299–valine 319, and tryptophan 322–leucine 342. Histidine 270 provides a ligand contact to heme. Histidine 327 provides a ligand contact to heme.

This sequence belongs to the COX15/CtaA family. Type 2 subfamily. In terms of assembly, interacts with CtaB. The cofactor is heme b.

It localises to the cell membrane. It catalyses the reaction Fe(II)-heme o + 2 A + H2O = Fe(II)-heme a + 2 AH2. It participates in porphyrin-containing compound metabolism; heme A biosynthesis; heme A from heme O: step 1/1. Its function is as follows. Catalyzes the conversion of heme O to heme A by two successive hydroxylations of the methyl group at C8. The first hydroxylation forms heme I, the second hydroxylation results in an unstable dihydroxymethyl group, which spontaneously dehydrates, resulting in the formyl group of heme A. This chain is Heme A synthase, found in Sphingopyxis alaskensis (strain DSM 13593 / LMG 18877 / RB2256) (Sphingomonas alaskensis).